Reading from the N-terminus, the 164-residue chain is Ribosome maturation factor RimP (164 aa).

It belongs to the RimP family.

The protein localises to the cytoplasm. Its function is as follows. Required for maturation of 30S ribosomal subunits. The protein is Ribosome maturation factor RimP of Mycoplasma mycoides subsp. mycoides SC (strain CCUG 32753 / NCTC 10114 / PG1).